The following is a 192-amino-acid chain: MTVVNKSFLTFLVFFCQILFPLNASALEAPRTVKAWASVLGDNIAETWNEPQHVDLYVPAITWHARFAYDKEKTDRYNERPWGAGIGKSRWDEKGNWHGLYVMAFKDSYNKWEPIAGYGWEATWRPLPDDAFHVGLGYTLGVTARDNWDYIPIPLVLPLASVGYGPATFQMTYIPGTYNNGNVYFAWLRLQF.

An N-terminal signal peptide occupies residues 1-26 (MTVVNKSFLTFLVFFCQILFPLNASA). Residues His64, Asp107, and Ser108 contribute to the active site.

This sequence belongs to the lipid A palmitoyltransferase family. Homodimer.

It localises to the cell outer membrane. The enzyme catalyses a lipid A + a 1,2-diacyl-sn-glycero-3-phosphocholine = a hepta-acyl lipid A + a 2-acyl-sn-glycero-3-phosphocholine. The catalysed reaction is a lipid IVA + a 1,2-diacyl-sn-glycero-3-phosphocholine = a lipid IVB + a 2-acyl-sn-glycero-3-phosphocholine. It catalyses the reaction a lipid IIA + a 1,2-diacyl-sn-glycero-3-phosphocholine = a lipid IIB + a 2-acyl-sn-glycero-3-phosphocholine. In terms of biological role, transfers a fatty acid residue from the sn-1 position of a phospholipid to the N-linked hydroxyfatty acid chain on the proximal unit of lipid A or its precursors. The protein is Lipid A acyltransferase PagP of Cronobacter turicensis (strain DSM 18703 / CCUG 55852 / LMG 23827 / z3032).